The sequence spans 340 residues: Nod factor export ATP-binding protein I (340 aa).

Over residues 1–24 (MLKRKLGPEDLRRLETPAIERESH) the composition is skewed to basic and acidic residues. The disordered stretch occupies residues 1–34 (MLKRKLGPEDLRRLETPAIERESHGQTSAKSSVP). Over residues 25 to 34 (GQTSAKSSVP) the composition is skewed to polar residues. An ABC transporter domain is found at 42–272 (VDFAGVTKSY…HIGCQVMEIY (231 aa)). 74 to 81 (GPNGAGKS) contributes to the ATP binding site.

The protein belongs to the ABC transporter superfamily. Lipooligosaccharide exporter (TC 3.A.1.102) family. The complex is composed of two ATP-binding proteins (NodI) and two transmembrane proteins (NodJ).

The protein localises to the cell inner membrane. Functionally, part of the ABC transporter complex NodIJ involved in the export of the nodulation factors (Nod factors), the bacterial signal molecules that induce symbiosis and subsequent nodulation induction. Nod factors are LCO (lipo-chitin oligosaccharide), a modified beta-1,4-linked N-acetylglucosamine oligosaccharide. This subunit is responsible for energy coupling to the transport system. This is Nod factor export ATP-binding protein I from Mesorhizobium japonicum (strain LMG 29417 / CECT 9101 / MAFF 303099) (Mesorhizobium loti (strain MAFF 303099)).